Reading from the N-terminus, the 223-residue chain is Peptidyl-tRNA hydrolase (223 aa).

Tyrosine 14 lines the tRNA pocket. The active-site Proton acceptor is histidine 19. 3 residues coordinate tRNA: tyrosine 64, asparagine 66, and asparagine 112. The disordered stretch occupies residues 183-223 (MNVRNTRPKPGKRQKGEGDGSTDPAPAAKEGKGPLPPTQKP).

It belongs to the PTH family. In terms of assembly, monomer.

The protein localises to the cytoplasm. It catalyses the reaction an N-acyl-L-alpha-aminoacyl-tRNA + H2O = an N-acyl-L-amino acid + a tRNA + H(+). Hydrolyzes ribosome-free peptidyl-tRNAs (with 1 or more amino acids incorporated), which drop off the ribosome during protein synthesis, or as a result of ribosome stalling. Its function is as follows. Catalyzes the release of premature peptidyl moieties from peptidyl-tRNA molecules trapped in stalled 50S ribosomal subunits, and thus maintains levels of free tRNAs and 50S ribosomes. This Sorangium cellulosum (strain So ce56) (Polyangium cellulosum (strain So ce56)) protein is Peptidyl-tRNA hydrolase.